The following is a 182-amino-acid chain: Large ribosomal subunit protein uL5m (182 aa).

Belongs to the universal ribosomal protein uL5 family.

Its subcellular location is the mitochondrion. The sequence is that of Large ribosomal subunit protein uL5m (RPL5) from Reclinomonas americana.